A 116-amino-acid polypeptide reads, in one-letter code: Iron-sulfur cluster insertion protein ErpA (116 aa).

The iron-sulfur cluster site is built by Cys44, Cys108, and Cys110.

The protein belongs to the HesB/IscA family. As to quaternary structure, homodimer. Iron-sulfur cluster is required as a cofactor.

Functionally, required for insertion of 4Fe-4S clusters for at least IspG. In Idiomarina loihiensis (strain ATCC BAA-735 / DSM 15497 / L2-TR), this protein is Iron-sulfur cluster insertion protein ErpA.